The primary structure comprises 632 residues: Probable potassium transport system protein Kup (632 aa).

12 helical membrane-spanning segments follow: residues 20–40, 60–80, 111–131, 146–166, 178–198, 216–236, 257–277, 289–309, 347–367, 379–399, 404–424, and 429–449; these read LLVA…LYTL, ILSL…VMFI, LMVI…MITP, FDGI…ALFL, LFGP…VHGI, FFIV…LALT, WFAL…AILL, LLAP…ATVI, IYIA…VIGF, VAVT…MLLL, PVLA…FFAA, and IVQG…LMST.

It belongs to the HAK/KUP transporter (TC 2.A.72) family.

It localises to the cell inner membrane. The enzyme catalyses K(+)(in) + H(+)(in) = K(+)(out) + H(+)(out). Its function is as follows. Transport of potassium into the cell. Likely operates as a K(+):H(+) symporter. In Pseudomonas putida (strain W619), this protein is Probable potassium transport system protein Kup.